We begin with the raw amino-acid sequence, 151 residues long: 6,7-dimethyl-8-ribityllumazine synthase (151 aa).

5-amino-6-(D-ribitylamino)uracil contacts are provided by residues phenylalanine 15, 49-51 (AVE), and 73-75 (AVI). 78 to 79 (ET) is a binding site for (2S)-2-hydroxy-3-oxobutyl phosphate. Histidine 81 functions as the Proton donor in the catalytic mechanism. Phenylalanine 106 is a binding site for 5-amino-6-(D-ribitylamino)uracil. A (2S)-2-hydroxy-3-oxobutyl phosphate-binding site is contributed by arginine 120.

This sequence belongs to the DMRL synthase family. As to quaternary structure, forms an icosahedral capsid composed of 60 subunits, arranged as a dodecamer of pentamers.

It carries out the reaction (2S)-2-hydroxy-3-oxobutyl phosphate + 5-amino-6-(D-ribitylamino)uracil = 6,7-dimethyl-8-(1-D-ribityl)lumazine + phosphate + 2 H2O + H(+). It participates in cofactor biosynthesis; riboflavin biosynthesis; riboflavin from 2-hydroxy-3-oxobutyl phosphate and 5-amino-6-(D-ribitylamino)uracil: step 1/2. Functionally, catalyzes the formation of 6,7-dimethyl-8-ribityllumazine by condensation of 5-amino-6-(D-ribitylamino)uracil with 3,4-dihydroxy-2-butanone 4-phosphate. This is the penultimate step in the biosynthesis of riboflavin. This chain is 6,7-dimethyl-8-ribityllumazine synthase, found in Coxiella burnetii (strain CbuG_Q212) (Coxiella burnetii (strain Q212)).